The primary structure comprises 141 residues: Eukaryotic translation initiation factor 1A (141 aa).

Residues 1-15 show a composition bias toward basic residues; the sequence is MPKNKGKGGKNRRRG. Residues 1-28 are disordered; sequence MPKNKGKGGKNRRRGKNENEQKRELQFK. Residues 16-28 are compositionally biased toward basic and acidic residues; sequence KNENEQKRELQFK. The region spanning 21-95 is the S1-like domain; sequence QKRELQFKEE…DKADVILRYN (75 aa).

This sequence belongs to the eIF-1A family.

Seems to be required for maximal rate of protein biosynthesis. Enhances ribosome dissociation into subunits and stabilizes the binding of the initiator Met-tRNA(I) to 40 S ribosomal subunits. This chain is Eukaryotic translation initiation factor 1A (eif1a), found in Dictyostelium discoideum (Social amoeba).